A 524-amino-acid polypeptide reads, in one-letter code: Bifunctional purine biosynthesis protein PurH (524 aa).

In terms of domain architecture, MGS-like spans 1-149; it reads MSDPLIKRAL…KNNESVTVLT (149 aa).

This sequence belongs to the PurH family.

It catalyses the reaction (6R)-10-formyltetrahydrofolate + 5-amino-1-(5-phospho-beta-D-ribosyl)imidazole-4-carboxamide = 5-formamido-1-(5-phospho-D-ribosyl)imidazole-4-carboxamide + (6S)-5,6,7,8-tetrahydrofolate. It carries out the reaction IMP + H2O = 5-formamido-1-(5-phospho-D-ribosyl)imidazole-4-carboxamide. Its pathway is purine metabolism; IMP biosynthesis via de novo pathway; 5-formamido-1-(5-phospho-D-ribosyl)imidazole-4-carboxamide from 5-amino-1-(5-phospho-D-ribosyl)imidazole-4-carboxamide (10-formyl THF route): step 1/1. The protein operates within purine metabolism; IMP biosynthesis via de novo pathway; IMP from 5-formamido-1-(5-phospho-D-ribosyl)imidazole-4-carboxamide: step 1/1. The protein is Bifunctional purine biosynthesis protein PurH of Chlorobium phaeovibrioides (strain DSM 265 / 1930) (Prosthecochloris vibrioformis (strain DSM 265)).